Here is a 93-residue protein sequence, read N- to C-terminus: Mitochondrial import inner membrane translocase subunit Tim10-A (93 aa).

Positions 32 to 57 (CHKKCVPPHYKEAELSKGESVCLDRC) match the Twin CX3C motif motif. Disulfide bonds link cysteine 32/cysteine 57 and cysteine 36/cysteine 53.

This sequence belongs to the small Tim family. Heterohexamer; composed of 3 copies of TIMM9 and 3 copies of TIMM10/TIM10A, named soluble 70 kDa complex. The complex forms a 6-bladed alpha-propeller structure and associates with the TIMM22 component of the TIM22 complex. Interacts with multi-pass transmembrane proteins in transit.

It localises to the mitochondrion inner membrane. In terms of biological role, mitochondrial intermembrane chaperone that participates in the import and insertion of multi-pass transmembrane proteins into the mitochondrial inner membrane. May also be required for the transfer of beta-barrel precursors from the TOM complex to the sorting and assembly machinery (SAM complex) of the outer membrane. Acts as a chaperone-like protein that protects the hydrophobic precursors from aggregation and guide them through the mitochondrial intermembrane space. This is Mitochondrial import inner membrane translocase subunit Tim10-A (timm10-a) from Xenopus laevis (African clawed frog).